Consider the following 332-residue polypeptide: Cytochrome c1, heme protein, mitochondrial (332 aa).

Residues 1–70 (MLARTCLRST…YYHLYGFASA (70 aa)) constitute a mitochondrion transit peptide. The Mitochondrial intermembrane segment spans residues 71–277 (MTPAEEGLHA…AEPEMDDRKR (207 aa)). Residues 97–250 (QALRRGFQVY…GLVDYEDGTP (154 aa)) enclose the Cytochrome c domain. Positions 110, 113, and 114 each coordinate heme c. The span at 139–151 (EENEYDTEPNDQG) shows a compositional bias: acidic residues. Positions 139–162 (EENEYDTEPNDQGEIEKRPGKLSD) are disordered. A heme c-binding site is contributed by M234. The chain crosses the membrane as a helical span at residues 278–296 (MGMKVLVVTSVLFALSVYV). The Mitochondrial matrix segment spans residues 297-332 (KRYKWAWLKSRKIVYDPPKSPPPATNLALPQQRAKS).

Belongs to the cytochrome c family. Component of the ubiquinol-cytochrome c oxidoreductase (cytochrome b-c1 complex, complex III, CIII), a multisubunit enzyme composed of 10 subunits. The complex is composed of 3 respiratory subunits cytochrome b (cob), cytochrome c1 (cyt-1) and Rieske protein (fes-1), 2 core protein subunits pep and ucr-1, and 5 low-molecular weight protein subunits qcr6, qcr7, qcr8, qcr9 and probably NCU16844/qcr10. The complex exists as an obligatory dimer and forms supercomplexes (SCs) in the inner mitochondrial membrane with NADH-ubiquinone oxidoreductase (complex I, CI) and cytochrome c oxidase (complex IV, CIV), resulting in different assemblies (supercomplexes SCI(1)III(2), SCIII(2)IV(1) and SCIII(2)IV(2) as well as higher order I(x)III(y)IV(z) megacomplexes). Requires heme c as cofactor.

The protein resides in the mitochondrion inner membrane. It catalyses the reaction a quinol + 2 Fe(III)-[cytochrome c](out) = a quinone + 2 Fe(II)-[cytochrome c](out) + 2 H(+)(out). Its function is as follows. Component of the ubiquinol-cytochrome c oxidoreductase, a multisubunit transmembrane complex that is part of the mitochondrial electron transport chain which drives oxidative phosphorylation. The respiratory chain contains 3 multisubunit complexes succinate dehydrogenase (complex II, CII), ubiquinol-cytochrome c oxidoreductase (cytochrome b-c1 complex, complex III, CIII) and cytochrome c oxidase (complex IV, CIV), that cooperate to transfer electrons derived from NADH and succinate to molecular oxygen, creating an electrochemical gradient over the inner membrane that drives transmembrane transport and the ATP synthase. The cytochrome b-c1 complex catalyzes electron transfer from ubiquinol to cytochrome c, linking this redox reaction to translocation of protons across the mitochondrial inner membrane, with protons being carried across the membrane as hydrogens on the quinol. In the process called Q cycle, 2 protons are consumed from the matrix, 4 protons are released into the intermembrane space and 2 electrons are passed to cytochrome c. Cytochrome c1 is a catalytic core subunit containing a c-type heme. It transfers electrons from the [2Fe-2S] iron-sulfur cluster of the Rieske protein to cytochrome c. This Neurospora crassa (strain ATCC 24698 / 74-OR23-1A / CBS 708.71 / DSM 1257 / FGSC 987) protein is Cytochrome c1, heme protein, mitochondrial (cyt-1).